Reading from the N-terminus, the 362-residue chain is MKANFSLATISKNITSSLHVGFVNISSNESTFNCSHKPSDKHLDAIPVLYYIIFGVGFLVNTIVVTLFCCQKGPKKVSSIYIFNLAVADLLLLATLPLWATYYSHRYDWIFGPVMCKVFGSFLTLNMFASIFFITCMSVDRYQSVIYPFLSQRRNPWQASYIVPLVWCMACLSSLPTFYFRDVRTIEYLGVNACIMAFPPEKYAQWSAGIALMKNILGFIIPLIFIATCYFGIRKHLLKTNSYGKNRITRDQVLKMAAAVVLAFIICWLPFHVLTFLDALAWMGVINSCEVIAVIDLALPFAILLGFTNSCINPFLYCFVGNRFQQKLRRVFRVPITWLQGKRENGSCGKSSSFREMETFVS.

At Met1–Asp44 the chain is on the extracellular side. N-linked (GlcNAc...) asparagine glycosylation is found at Asn4, Asn13, Asn24, Asn28, and Asn33. Disulfide bonds link Cys34–Cys289 and Cys116–Cys194. The helical transmembrane segment at Ala45–Cys69 threads the bilayer. At Cys70–Ser79 the chain is on the cytoplasmic side. A helical transmembrane segment spans residues Ile80–Tyr103. Angiotensin II is bound by residues Tyr102 and Tyr103. Residues Ser104 to Pro113 lie on the Extracellular side of the membrane. A helical membrane pass occupies residues Val114–Val139. The Cytoplasmic portion of the chain corresponds to Asp140–Gln158. Residues Ala159 to Phe180 form a helical membrane-spanning segment. Angiotensin II contacts are provided by Arg181, Tyr203, and Lys214. Topologically, residues Arg181 to Gln205 are extracellular. The helical transmembrane segment at Trp206 to Phe231 threads the bilayer. At Gly232–Met256 the chain is on the cytoplasmic side. The chain crosses the membrane as a helical span at residues Ala257–Leu280. An angiotensin II-binding site is contributed by Asp278. Topologically, residues Ala281–Ala293 are extracellular. A helical membrane pass occupies residues Val294–Phe319. Angiotensin II is bound at residue Asp296. The Cytoplasmic segment spans residues Val320–Ser362. The interval Arg323–Phe332 is helix VIII.

Belongs to the G-protein coupled receptor 1 family. Interacts with MTUS1.

Its subcellular location is the cell membrane. Receptor for angiotensin II, a vasoconstricting peptide. Signals primarily via a non-canonical G-protein- and beta-arrestin independent pathways. Cooperates with MTUS1 to inhibit ERK2 activation and cell proliferation. The sequence is that of Type-2 angiotensin II receptor (AGTR2) from Ovis aries (Sheep).